The sequence spans 1550 residues: MSIERVPILGKETIHVGYGIADHIVNEVIANLASSTYVIVTDTNMARTPQYSKLTDDFKTNLSKKRPESRLLTYCVSPGENNKNRVTKAAVEDFLLQQGCTRDTVILAVGGGVIGDMIGFVAATFMRGVRVVQVPTTLLAMVDSSVGGKTAIDTPLGKNFIGAFHQPEYVFCDVSFLETLPARQFINGMAEVVKTAAIWNEEEFTRLENFSKKFLSVVTSKKPDLQSIKAELVKTVLESVRVKAGVVSSDEKEAGLRNLLNFGHTIGHAIEAVLTPEALHGECVSIGMIKEAELSRYLGILPPVAVARLSKCLVAYGLPVSIDDKEFLKKVGPKRHYVEIDILLKKMAIDKKNDGSKIRCVLLEKIGKCYQLKAHQVSKQDLSFVLTDEVLVHPFTNPPKENIIVPPGSKSISNRALILAALGNGTVRVKNLLHSDDTKHMLDAVASLKGAEISTEDNGETIVVKGNGGNLVTCGEELYLGNAGTASRFLTTVASLVGKSPASDDVILTGNARMQERPIGPLVDALRSNGSEIEYLNKQGSLPLKISAGNGLKGGRIELAATISSQYVSSILMCAPYAKEPVTLALVGGKPISQLYIDMTCAMMKSFGIEVTKSTTEEYTYHIPKGIYKNPTEYVIESDASSATYPLAFAAMTGTSCTIPNIGSSSLQGDARFAVDVLKPMGCKVEQTATSTTVTGPPRGHLKPLPHVDMEPMTDAFLTASVVAAVAKGGSTSITGIANQRVKECNRIEAMVTELAKFGVSANELPDGIEIHGIDIKDLKTPEISDRGVCSYDDHRVAMSFSLLAGLCKEPVLILERSTTGKTWPGWWDILHSKFKIELDGYEPPFNTDKHVIKSSDKGVIVIGMRGTGKSTLSEWLASFLGFKMLDMDKYLEEKLGTDIKSLIKAKGWEHFRKEEAIVAKECFTKFSKGYVLSTGGGIVEGEDARQQLKSYADNGGIVLHLHRDLDETVTFLAADTTRPAYSSEVQEVWLRREKWYHECSNYHFYSSHCSTEDEFNHLRKSFVNYIKLITGAERSVVPTGRSTAVVLTLPDLNNVAGDLESITIGADAVELRVDLLKDTSAAFVAAQIATTRKHADLPIIYTVRTVSQGGKFPDENVDELKSLLLLGIRLGVAYIDLQLTAPNELIEEISSKKGFTRIIGTYQDINGELKWNNVEWKNKYNQGVSMNADIVRLVGRANSIQDNLDLEDFKKQNTLKPLIAFNLGTQGKLSQVLNGTFTPISHQLLPNDDGLLTIGEINQTYFDIGGFTAKKFWVIGSPIEHSRSPNLHNAGYKALNLPYQFGRFEATDVDVVYDNLINKSDFGGLAITMPLKLDIMKFATKLSDAAETIGAVNTLIPVEGGYFGDNTDWVGISNSFIRAGVPPKSSSNGLVVGAGGTSRAAIYALHQMGCTKIYLVNRTVAKLEELVKSFPKDYNLEIVETEQQADKVNKVLLAVSCIPADKPLDSDVLKKIERILSNGSEQVAGFKPTLLEASYKPRVTPIMKLAEEQYKWKVIPGVEMLVNQGDRQFKLHTGFSAPYEIIHRAVVEE.

The tract at residues 1-379 (MSIERVPILG…YQLKAHQVSK (379 aa)) is 3-dehydroquinate synthase. Residues 42-44 (DTN), 80-83 (ENNK), 111-113 (GGV), and D116 each bind NAD(+). Residue R127 participates in 7-phospho-2-dehydro-3-deoxy-D-arabino-heptonate binding. Position 136-137 (136-137 (TT)) interacts with NAD(+). Positions 143 and 149 each coordinate 7-phospho-2-dehydro-3-deoxy-D-arabino-heptonate. K158 is an NAD(+) binding site. N159 is a 7-phospho-2-dehydro-3-deoxy-D-arabino-heptonate binding site. NAD(+) is bound by residues 176–179 (FLET) and N187. E191 lines the Zn(2+) pocket. Residues 191–194 (EVVK) and K243 each bind 7-phospho-2-dehydro-3-deoxy-D-arabino-heptonate. The Proton acceptor; for 3-dehydroquinate synthase activity role is filled by E253. Residues 257–261 (RNLLN) and H264 each bind 7-phospho-2-dehydro-3-deoxy-D-arabino-heptonate. H264 is a binding site for Zn(2+). H268 serves as the catalytic Proton acceptor; for 3-dehydroquinate synthase activity. 7-phospho-2-dehydro-3-deoxy-D-arabino-heptonate contacts are provided by H280 and K351. Position 280 (H280) interacts with Zn(2+). Residues 392–837 (VHPFTNPPKE…WDILHSKFKI (446 aa)) are EPSP synthase. The shikimate kinase stretch occupies residues 857-1047 (DKGVIVIGMR…VPTGRSTAVV (191 aa)). 864–871 (GMRGTGKS) serves as a coordination point for ATP. Residues 1048-1257 (LTLPDLNNVA…NDDGLLTIGE (210 aa)) form a 3-dehydroquinase region. Catalysis depends on R1193, which acts as the Schiff-base intermediate with substrate; for 3-dehydroquinate dehydratase activity. Residues 1270 to 1550 (AKKFWVIGSP…EIIHRAVVEE (281 aa)) form a shikimate dehydrogenase region.

This sequence in the N-terminal section; belongs to the sugar phosphate cyclases superfamily. Dehydroquinate synthase family. The protein in the 2nd section; belongs to the EPSP synthase family. It in the 3rd section; belongs to the shikimate kinase family. In the 4th section; belongs to the type-I 3-dehydroquinase family. This sequence in the C-terminal section; belongs to the shikimate dehydrogenase family. Homodimer. Zn(2+) serves as cofactor.

The protein localises to the cytoplasm. The catalysed reaction is 7-phospho-2-dehydro-3-deoxy-D-arabino-heptonate = 3-dehydroquinate + phosphate. The enzyme catalyses 3-dehydroquinate = 3-dehydroshikimate + H2O. It catalyses the reaction shikimate + NADP(+) = 3-dehydroshikimate + NADPH + H(+). It carries out the reaction shikimate + ATP = 3-phosphoshikimate + ADP + H(+). The catalysed reaction is 3-phosphoshikimate + phosphoenolpyruvate = 5-O-(1-carboxyvinyl)-3-phosphoshikimate + phosphate. The protein operates within metabolic intermediate biosynthesis; chorismate biosynthesis; chorismate from D-erythrose 4-phosphate and phosphoenolpyruvate: step 2/7. Its pathway is metabolic intermediate biosynthesis; chorismate biosynthesis; chorismate from D-erythrose 4-phosphate and phosphoenolpyruvate: step 3/7. It functions in the pathway metabolic intermediate biosynthesis; chorismate biosynthesis; chorismate from D-erythrose 4-phosphate and phosphoenolpyruvate: step 4/7. It participates in metabolic intermediate biosynthesis; chorismate biosynthesis; chorismate from D-erythrose 4-phosphate and phosphoenolpyruvate: step 5/7. The protein operates within metabolic intermediate biosynthesis; chorismate biosynthesis; chorismate from D-erythrose 4-phosphate and phosphoenolpyruvate: step 6/7. Its function is as follows. The AROM polypeptide catalyzes 5 consecutive enzymatic reactions in prechorismate polyaromatic amino acid biosynthesis. This is Pentafunctional AROM polypeptide from Candida dubliniensis (strain CD36 / ATCC MYA-646 / CBS 7987 / NCPF 3949 / NRRL Y-17841) (Yeast).